Reading from the N-terminus, the 549-residue chain is Probable acyl-activating enzyme 10 (549 aa).

This sequence belongs to the ATP-dependent AMP-binding enzyme family. In terms of tissue distribution, expressed at low levels in roots.

May act as an acid--thiol ligase that activates carboxylic acids by forming acyl-CoAs. This chain is Probable acyl-activating enzyme 10 (AEE10), found in Arabidopsis thaliana (Mouse-ear cress).